A 555-amino-acid chain; its full sequence is Membrane protein insertase YidC (555 aa).

The helical transmembrane segment at 7 to 24 threads the bilayer; it reads ILWVIFSMSLVLLYDNWQ. The segment at 61–81 is disordered; the sequence is TAGAAAPAAPGGAPQAAAQPT. 5 consecutive transmembrane segments (helical) span residues 341–361, 364–384, 430–450, 468–488, and 503–523; these read GWLTILAKPLFWLLEKLHGFL, WGWSIIALTVLIKLVFFPLSA, LGGCLPIVIQIPVFIALYWVL, LSVPDPFYILPIVMAVSMFVQ, and VMMIMPLVFSFMFFFFPAGLV.

Belongs to the OXA1/ALB3/YidC family. Type 1 subfamily. As to quaternary structure, interacts with the Sec translocase complex via SecD. Specifically interacts with transmembrane segments of nascent integral membrane proteins during membrane integration.

The protein resides in the cell inner membrane. Functionally, required for the insertion and/or proper folding and/or complex formation of integral membrane proteins into the membrane. Involved in integration of membrane proteins that insert both dependently and independently of the Sec translocase complex, as well as at least some lipoproteins. Aids folding of multispanning membrane proteins. This is Membrane protein insertase YidC from Cupriavidus pinatubonensis (strain JMP 134 / LMG 1197) (Cupriavidus necator (strain JMP 134)).